The sequence spans 244 residues: Small ribosomal subunit protein uS2 (244 aa).

It belongs to the universal ribosomal protein uS2 family.

In Desulforudis audaxviator (strain MP104C), this protein is Small ribosomal subunit protein uS2.